Reading from the N-terminus, the 352-residue chain is Probable cytosolic iron-sulfur protein assembly protein CIAO1 homolog (352 aa).

WD repeat units follow at residues 12-51 (ASNKRLWSLSWNHKGSVLISSGEDRVIKLWAKCNDQLWGS), 58-97 (AHKKSIRCVTWSPCGTYIASASFDGTVTIWKISEAHSAPE), 106-145 (GHTSEVKCVAWCPSGHLIATCGRDKSVWLWEFDDEEDVQC), 151-190 (PHSQDVKSVAWHPHGEVLVSTSYDNKINVYREELDDWTVF), 195-234 (GHDSTVWKAEFSPSGDILASCSDDLCVKLWSWEGVCGKSS), 245-284 (YHTRTIFDLNWSPDSQLLASCGSDNRLCIYKMPANGLTHI), and 303-352 (AHSE…EYEL).

Belongs to the WD repeat CIA1 family.

Functionally, essential component of the cytosolic iron-sulfur (Fe/S) protein assembly machinery. Required for the maturation of extramitochondrial Fe/S proteins. This Schistosoma japonicum (Blood fluke) protein is Probable cytosolic iron-sulfur protein assembly protein CIAO1 homolog.